A 149-amino-acid polypeptide reads, in one-letter code: Deoxyuridine 5'-triphosphate nucleotidohydrolase (149 aa).

Residues 68–70 (RSG), Asn81, and 85–87 (LID) contribute to the substrate site.

It belongs to the dUTPase family. Mg(2+) is required as a cofactor.

The enzyme catalyses dUTP + H2O = dUMP + diphosphate + H(+). The protein operates within pyrimidine metabolism; dUMP biosynthesis; dUMP from dCTP (dUTP route): step 2/2. Its function is as follows. This enzyme is involved in nucleotide metabolism: it produces dUMP, the immediate precursor of thymidine nucleotides and it decreases the intracellular concentration of dUTP so that uracil cannot be incorporated into DNA. This Azoarcus sp. (strain BH72) protein is Deoxyuridine 5'-triphosphate nucleotidohydrolase.